The chain runs to 106 residues: MSVARFSCGKTAQLSKKQTGYYSPEIFPSTGKDCNPQPANCLKDQYVLRHCCVDDRSGKMGYSVKFLVLTRMDTETASLFHCKPCYSKMTFTIYHPLTHSFFTSCW.

This is an uncharacterized protein from Escherichia coli O157:H7.